Reading from the N-terminus, the 428-residue chain is 3-phosphoshikimate 1-carboxyvinyltransferase (428 aa).

3-phosphoshikimate contacts are provided by Lys22, Ser23, and Arg27. Lys22 lines the phosphoenolpyruvate pocket. Residues Gly94 and Arg122 each contribute to the phosphoenolpyruvate site. Residues Ser169, Ser170, Gln171, Ser197, Asp315, and Lys342 each contribute to the 3-phosphoshikimate site. Phosphoenolpyruvate is bound at residue Gln171. Asp315 serves as the catalytic Proton acceptor. Arg346, Arg389, and Lys414 together coordinate phosphoenolpyruvate.

The protein belongs to the EPSP synthase family. As to quaternary structure, monomer.

It localises to the cytoplasm. It carries out the reaction 3-phosphoshikimate + phosphoenolpyruvate = 5-O-(1-carboxyvinyl)-3-phosphoshikimate + phosphate. Its pathway is metabolic intermediate biosynthesis; chorismate biosynthesis; chorismate from D-erythrose 4-phosphate and phosphoenolpyruvate: step 6/7. Its function is as follows. Catalyzes the transfer of the enolpyruvyl moiety of phosphoenolpyruvate (PEP) to the 5-hydroxyl of shikimate-3-phosphate (S3P) to produce enolpyruvyl shikimate-3-phosphate and inorganic phosphate. The chain is 3-phosphoshikimate 1-carboxyvinyltransferase from Cellvibrio japonicus (strain Ueda107) (Pseudomonas fluorescens subsp. cellulosa).